Reading from the N-terminus, the 767-residue chain is Probable NADP-dependent malic enzyme (767 aa).

Residues Met-1–Ala-430 are malic enzyme. Tyr-42 serves as the catalytic Proton donor. Catalysis depends on Lys-97, which acts as the Proton acceptor. Residues Glu-139, Asp-140, and Asp-165 each contribute to the a divalent metal cation site. NADP(+) is bound by residues Ala-198–Ala-201, Asn-290, and Asn-322. Positions Asn-431–Val-767 are phosphate acetyltransferase.

It in the N-terminal section; belongs to the malic enzymes family. The protein in the C-terminal section; belongs to the phosphate acetyltransferase and butyryltransferase family. It depends on Mg(2+) as a cofactor. Mn(2+) is required as a cofactor.

The catalysed reaction is (S)-malate + NADP(+) = pyruvate + CO2 + NADPH. It carries out the reaction oxaloacetate + H(+) = pyruvate + CO2. The polypeptide is Probable NADP-dependent malic enzyme (Rickettsia prowazekii (strain Madrid E)).